Reading from the N-terminus, the 376-residue chain is 1-acyl-sn-glycerol-3-phosphate acyltransferase gamma (376 aa).

Residues 1–124 (MGLLAFLKTQ…LGSSKVLAKK (124 aa)) are Cytoplasmic-facing. The HXXXXD motif signature appears at 96–101 (HNFEID). A helical membrane pass occupies residues 125 to 145 (ELLYVPLIGWTWYFLEIVFCK). Topologically, residues 146-316 (RKWEEDRDTV…TLLNFLSWAT (171 aa)) are lumenal. Residues 317-339 (ILLSPLFSFVLGVFASGSPLLIL) form a helical membrane-spanning segment. At 340–376 (TFLGFVGAASFGVRRLIGVTEIEKGSSYGNQEFKKKE) the chain is on the cytoplasmic side.

The protein belongs to the 1-acyl-sn-glycerol-3-phosphate acyltransferase family.

The protein resides in the endoplasmic reticulum membrane. It is found in the nucleus envelope. It catalyses the reaction a 1-acyl-sn-glycero-3-phosphate + an acyl-CoA = a 1,2-diacyl-sn-glycero-3-phosphate + CoA. The catalysed reaction is pentadecanoyl-CoA + 1-(9Z-octadecenoyl)-sn-glycero-3-phosphate = 1-(9Z)-octadecenoyl-2-pentadecanoyl-sn-glycero-3-phosphate + CoA. The enzyme catalyses heptadecanoyl-CoA + 1-(9Z-octadecenoyl)-sn-glycero-3-phosphate = 1-(9Z)-octadecenoyl-2-heptadecanoyl-sn-glycero-3-phosphate + CoA. It carries out the reaction 1-(9Z-octadecenoyl)-sn-glycero-3-phosphate + octadecanoyl-CoA = 1-(9Z-octadecenoyl)-2-octadecanoyl-sn-glycero-3-phosphate + CoA. It catalyses the reaction nonadecanoyl-CoA + 1-(9Z-octadecenoyl)-sn-glycero-3-phosphate = 1-(9Z)-octadecenoyl-2-nonadecanoyl-sn-glycero-3-phosphate + CoA. The catalysed reaction is 1-(9Z-octadecenoyl)-sn-glycero-3-phosphate + (5Z,8Z,11Z,14Z)-eicosatetraenoyl-CoA = 1-(9Z)-octadecenoyl-2-(5Z,8Z,11Z,14Z)-eicosatetraenoyl-sn-glycero-3-phosphate + CoA. The enzyme catalyses 1-(9Z-octadecenoyl)-sn-glycero-3-phosphate + (9Z)-octadecenoyl-CoA = 1,2-di-(9Z-octadecenoyl)-sn-glycero-3-phosphate + CoA. It carries out the reaction 1-(9Z-octadecenoyl)-sn-glycero-3-phosphate + (9Z,12Z)-octadecadienoyl-CoA = 1-(9Z)-octadecenoyl-2-(9Z,12Z)-octadecadienoyl-sn-glycero-3-phosphate + CoA. It catalyses the reaction 1-(9Z-octadecenoyl)-sn-glycero-3-phosphocholine + (5Z,8Z,11Z,14Z)-eicosatetraenoyl-CoA = 1-(9Z)-octadecenoyl-2-(5Z,8Z,11Z,14Z)-icosatetraenoyl-sn-glycero-3-phosphocholine + CoA. The catalysed reaction is 1-(9Z-octadecenoyl)-sn-glycero-3-phospho-(1D-myo-inositol) + (5Z,8Z,11Z,14Z)-eicosatetraenoyl-CoA = 1-(9Z-octadecenoyl)-2-(5Z,8Z,11Z,14Z-eicosatetraenoyl)-sn-glycero-3-phospho-1D-myo-inositol + CoA. The enzyme catalyses 1-(9Z-octadecenoyl)-sn-glycero-3-phospho-L-serine + (5Z,8Z,11Z,14Z)-eicosatetraenoyl-CoA = 1-(9Z-octadecenoyl)-2-(5Z,8Z,11Z,14Z-eicosatetraenoyl)-sn-glycero-3-phospho-L-serine + CoA. It carries out the reaction 1-hexadecanoyl-sn-glycero-3-phosphate + (9Z)-octadecenoyl-CoA = 1-hexadecanoyl-2-(9Z-octadecenoyl)-sn-glycero-3-phosphate + CoA. It catalyses the reaction 1-hexadecanoyl-sn-glycero-3-phosphate + (5Z,8Z,11Z,14Z)-eicosatetraenoyl-CoA = 1-hexadecanoyl-2-(5Z,8Z,11Z,14Z-eicosatetraenoyl)-sn-glycero-3-phosphate + CoA. The catalysed reaction is 1-heptadecanoyl-sn-glycero-3-phosphate + (5Z,8Z,11Z,14Z)-eicosatetraenoyl-CoA = 1-heptadecanoyl-2-(5Z,8Z,11Z,14Z)-eicosatetraenoyl-sn-glycero-3-phosphate + CoA. The enzyme catalyses 1-octadecanoyl-sn-glycero-3-phosphate + (9Z)-octadecenoyl-CoA = 1-octadecanoyl-2-(9Z-octadecenoyl)-sn-glycero-3-phosphate + CoA. It carries out the reaction 1-octadecanoyl-sn-glycero-3-phosphate + (5Z,8Z,11Z,14Z)-eicosatetraenoyl-CoA = 1-octadecanoyl-2-(5Z,8Z,11Z,14Z-eicosatetraenoyl)-sn-glycero-3-phosphate + CoA. It catalyses the reaction 1-(9Z-octadecenoyl)-sn-glycero-3-phosphate + hexadecanoyl-CoA = 1-hexadecanoyl-2-(9Z-octadecenoyl)-sn-glycero-3-phosphate + CoA. The catalysed reaction is 1-O-(9Z-octadecenyl)-sn-glycero-3-phosphate + (5Z,8Z,11Z,14Z)-eicosatetraenoyl-CoA = 1-O-(9Z-octadecenyl)-2-(5Z,8Z,11Z,14Z-eicosatetraenoyl)-sn-glycero-3-phosphate + CoA. The enzyme catalyses a 1-acyl-sn-glycero-3-phospho-(1D-myo-inositol) + (5Z,8Z,11Z,14Z)-eicosatetraenoyl-CoA = a 1-acyl-2-(5Z,8Z,11Z,14Z-eicosatetraenoyl)-sn-glycero-3-phospho-(1D-myo-inositol) + CoA. The protein operates within phospholipid metabolism; CDP-diacylglycerol biosynthesis; CDP-diacylglycerol from sn-glycerol 3-phosphate: step 2/3. Its function is as follows. Converts 1-acyl-sn-glycerol-3-phosphate (lysophosphatidic acid or LPA) into 1,2-diacyl-sn-glycerol-3-phosphate (phosphatidic acid or PA) by incorporating an acyl moiety at the sn-2 position of the glycerol backbone. Acts on LPA containing saturated or unsaturated fatty acids C16:0-C20:4 at the sn-1 position using C18:1, C20:4 or C18:2-CoA as the acyl donor. Also acts on lysophosphatidylcholine, lysophosphatidylinositol and lysophosphatidylserine using C18:1 or C20:4-CoA. Has a preference for arachidonoyl-CoA as a donor. Also has a modest lysophosphatidylinositol acyltransferase (LPIAT) activity, converts lysophosphatidylinositol (LPI) into phosphatidylinositol. This chain is 1-acyl-sn-glycerol-3-phosphate acyltransferase gamma (AGPAT3), found in Pongo abelii (Sumatran orangutan).